The sequence spans 212 residues: Cytidylate kinase (212 aa).

ATP is bound at residue 9 to 17; the sequence is GPAAAGKGT.

Belongs to the cytidylate kinase family. Type 1 subfamily.

The protein localises to the cytoplasm. The catalysed reaction is CMP + ATP = CDP + ADP. It catalyses the reaction dCMP + ATP = dCDP + ADP. The protein is Cytidylate kinase of Rhizobium meliloti (strain 1021) (Ensifer meliloti).